The sequence spans 1073 residues: Probable cellulose synthase A catalytic subunit 2 [UDP-forming] (1073 aa).

At 1-270 (MDGAKSGKQC…SSSRINPYRM (270 aa)) the chain is on the cytoplasmic side. Zn(2+)-binding residues include C13, C16, C32, C35, C40, C43, C55, and C58. The RING-type; degenerate zinc-finger motif lies at 13-59 (CQICGDGVGTAADGELFTACDVCGFPVCRPCYEYERKDGSQACPQCK). The segment at 66 to 98 (KGSPPILGDESDDVDADDASDVNYPTSGNQDHK) is disordered. Residues 74–85 (DESDDVDADDAS) show a composition bias toward acidic residues. Residues 271–291 (VIVLRLIVLCIFLHYRITNPV) form a helical membrane-spanning segment. Topologically, residues 292–293 (RN) are extracellular. The helical transmembrane segment at 294–314 (AYPLWLLSVICEIWFALSWIL) threads the bilayer. Residues 315 to 856 (DQFPKWSPIN…INTTIYPLTS (542 aa)) are Cytoplasmic-facing. S353, K359, E360, and D389 together coordinate UDP-alpha-D-glucose. The active site involves D389. The stretch at 443-470 (VKDRRAMKREYEEFKVRVNALVAKAQKV) forms a coiled coil. K530 is a binding site for UDP-alpha-D-glucose. K531 and D555 together coordinate Mn(2+). Positions 655–676 (GGRKKTKKSKEKSTEKKKSHKH) are disordered. D773 is an active-site residue. The chain crosses the membrane as a helical span at residues 857 to 877 (IPLLLYCILPAICLLTGKFII). Topologically, residues 878–882 (PEISN) are extracellular. Residues 883–903 (FASIWFISLFLSIFATGILEM) form a helical membrane-spanning segment. Over 904–918 (RWSGVGIDEWWRNEQ) the chain is Cytoplasmic. A helical transmembrane segment spans residues 919 to 939 (FWVIGGISAHLFAVFQGLLKV). Residues 940-969 (LAGIDTSFTVTSKASDEEGDFAELYMFKWT) are Extracellular-facing. The helical transmembrane segment at 970–990 (TLLIPPTTILIINLVGVVAGI) threads the bilayer. Topologically, residues 991-1001 (SYAINSGYQSW) are cytoplasmic. Residues 1002 to 1022 (GPLFGKLFFAFWVIVHLYPFL) form a helical membrane-spanning segment. The Extracellular portion of the chain corresponds to 1023 to 1031 (KGLMGRQNR). The chain crosses the membrane as a helical span at residues 1032-1052 (TPTIVVVWAILLASIFSLLWV). Topologically, residues 1053–1073 (RIDPFTTRVTGPDTQKCGINC) are cytoplasmic.

Belongs to the glycosyltransferase 2 family. Plant cellulose synthase subfamily. Mn(2+) is required as a cofactor. The cofactor is Zn(2+).

Its subcellular location is the cell membrane. The enzyme catalyses [(1-&gt;4)-beta-D-glucosyl](n) + UDP-alpha-D-glucose = [(1-&gt;4)-beta-D-glucosyl](n+1) + UDP + H(+). It functions in the pathway glycan metabolism; plant cellulose biosynthesis. Probable catalytic subunit of cellulose synthase terminal complexes ('rosettes'), required for beta-1,4-glucan microfibril crystallization, a major mechanism of the cell wall formation. The polypeptide is Probable cellulose synthase A catalytic subunit 2 [UDP-forming] (CESA2) (Oryza sativa subsp. japonica (Rice)).